Here is a 36-residue protein sequence, read N- to C-terminus: Conotoxin Cal6.1h (36 aa).

Residues 1-7 (GLGRPSR) constitute a propeptide that is removed on maturation. Disulfide bonds link Cys9–Cys25, Cys16–Cys29, and Cys24–Cys34.

Belongs to the conotoxin O1 superfamily. In terms of tissue distribution, expressed by the venom duct.

It localises to the secreted. In terms of biological role, probable neurotoxin with unknown target. Possibly targets ion channels. This is Conotoxin Cal6.1h from Californiconus californicus (California cone).